A 168-amino-acid polypeptide reads, in one-letter code: HTH-type transcriptional regulator IscR (168 aa).

The region spanning 2–131 (KLTSKGRYAV…NNITLGELMT (130 aa)) is the HTH rrf2-type domain. The segment at residues 28-51 (LADISERQGISLSYLEQLFSKLRK) is a DNA-binding region (H-T-H motif). Cys92, Cys98, and Cys104 together coordinate [2Fe-2S] cluster.

The cofactor is [2Fe-2S] cluster.

Regulates the transcription of several operons and genes involved in the biogenesis of Fe-S clusters and Fe-S-containing proteins. The sequence is that of HTH-type transcriptional regulator IscR from Vibrio parahaemolyticus serotype O3:K6 (strain RIMD 2210633).